We begin with the raw amino-acid sequence, 318 residues long: Taste receptor type 2 member 60 (318 aa).

Topologically, residues 1-7 are extracellular; that stretch reads MNGDHMV. Residues 8–28 form a helical membrane-spanning segment; that stretch reads LGSSVTDKKAIILVTILLLLR. Topologically, residues 29–40 are cytoplasmic; the sequence is LVAIAGNGFITA. Residues 41-61 form a helical membrane-spanning segment; that stretch reads ALGVEWVLRRMLLPCDKLLVS. Topologically, residues 62-88 are extracellular; the sequence is LGASHFCLQSVVMGKTIYVFLYPMAFP. The chain crosses the membrane as a helical span at residues 89 to 109; it reads YNPVLQFLAFQWDFLNAATLW. Topologically, residues 110–128 are cytoplasmic; sequence FSTWLSVFYCVKIATFTHP. A helical membrane pass occupies residues 129–149; it reads VFFWLKHKLSGWLPWMVFSYV. Topologically, residues 150 to 183 are extracellular; it reads GLSSFTTILFFIGNHRMYQNYLKNHLQPWNVTGN. An N-linked (GlcNAc...) asparagine glycan is attached at Asn-179. A helical membrane pass occupies residues 184-204; that stretch reads SIRSYCEKFYLFPLKMITWTM. Over 205–234 the chain is Cytoplasmic; it reads PTAVFFICMILLITSLGRHMKKALLTTSGF. The helical transmembrane segment at 235–255 threads the bilayer; it reads REPSVQAHIKALLALLSFAML. The Extracellular segment spans residues 256-264; it reads FISYFLSLV. A helical transmembrane segment spans residues 265-285; that stretch reads FSAAGIFPPLDFKFWVWESVI. Topologically, residues 286 to 318 are cytoplasmic; it reads YLCAAVHPIILLFSNCRLRAVLKSRRSSRCGTP.

Belongs to the G-protein coupled receptor T2R family.

It localises to the membrane. Receptor that may play a role in the perception of bitterness and is gustducin-linked. May play a role in sensing the chemical composition of the gastrointestinal content. The activity of this receptor may stimulate alpha gustducin, mediate PLC-beta-2 activation and lead to the gating of TRPM5. The sequence is that of Taste receptor type 2 member 60 (TAS2R60) from Pan troglodytes (Chimpanzee).